The chain runs to 385 residues: Pre-mRNA-splicing factor slt-11 (385 aa).

The interval 157 to 233 is disordered; sequence RKGREVDEEG…PPGPKDWLPP (77 aa). Positions 171-187 are enriched in low complexity; that stretch reads GSSSGAGRATGGNPAVG. Positions 239–312 constitute an RRM domain; sequence MSLFVTGIED…CPLRVRWSVP (74 aa). Basic and acidic residues predominate over residues 320 to 331; the sequence is KEQRSEMLRDGR. The interval 320–370 is disordered; the sequence is KEQRSEMLRDGRSAFGSGQKTGGQKAIGGQNAQGGASGAQKDDASNLTIAA.

The protein belongs to the SLT11 family. Associated with the spliceosome.

It is found in the nucleus. Functionally, involved in pre-mRNA splicing. Facilitates the cooperative formation of U2/U6 helix II in association with stem II in the spliceosome. Binds to RNA. This is Pre-mRNA-splicing factor slt-11 (slt-11) from Neurospora crassa (strain ATCC 24698 / 74-OR23-1A / CBS 708.71 / DSM 1257 / FGSC 987).